The sequence spans 716 residues: Fatty acid oxidation complex subunit alpha (716 aa).

The segment at 1-189 (MIYQSPTIQV…KVGAIDAVVA (189 aa)) is enoyl-CoA hydratase/isomerase. Aspartate 296 contacts substrate. The 3-hydroxyacyl-CoA dehydrogenase stretch occupies residues 311–716 (KDVNQAAVLG…AANNGSYYQA (406 aa)). Residues methionine 324, aspartate 343, 400-402 (VVE), lysine 407, and serine 429 each bind NAD(+). The active-site For 3-hydroxyacyl-CoA dehydrogenase activity is histidine 450. Asparagine 453 provides a ligand contact to NAD(+). Positions 500 and 660 each coordinate substrate.

This sequence in the N-terminal section; belongs to the enoyl-CoA hydratase/isomerase family. In the C-terminal section; belongs to the 3-hydroxyacyl-CoA dehydrogenase family. Heterotetramer of two alpha chains (FadB) and two beta chains (FadA).

It carries out the reaction a (3S)-3-hydroxyacyl-CoA + NAD(+) = a 3-oxoacyl-CoA + NADH + H(+). The enzyme catalyses a (3S)-3-hydroxyacyl-CoA = a (2E)-enoyl-CoA + H2O. The catalysed reaction is a 4-saturated-(3S)-3-hydroxyacyl-CoA = a (3E)-enoyl-CoA + H2O. It catalyses the reaction (3S)-3-hydroxybutanoyl-CoA = (3R)-3-hydroxybutanoyl-CoA. It carries out the reaction a (3Z)-enoyl-CoA = a 4-saturated (2E)-enoyl-CoA. The enzyme catalyses a (3E)-enoyl-CoA = a 4-saturated (2E)-enoyl-CoA. It participates in lipid metabolism; fatty acid beta-oxidation. Involved in the aerobic and anaerobic degradation of long-chain fatty acids via beta-oxidation cycle. Catalyzes the formation of 3-oxoacyl-CoA from enoyl-CoA via L-3-hydroxyacyl-CoA. It can also use D-3-hydroxyacyl-CoA and cis-3-enoyl-CoA as substrate. The chain is Fatty acid oxidation complex subunit alpha from Shewanella frigidimarina (strain NCIMB 400).